Reading from the N-terminus, the 240-residue chain is Probable transcriptional regulatory protein A2cp1_1765 (240 aa).

Belongs to the TACO1 family.

It localises to the cytoplasm. The protein is Probable transcriptional regulatory protein A2cp1_1765 of Anaeromyxobacter dehalogenans (strain 2CP-1 / ATCC BAA-258).